Reading from the N-terminus, the 323-residue chain is Acetyl-coenzyme A carboxylase carboxyl transferase subunit alpha (323 aa).

Residues 36-293 (ELELLSAKAQ…KEEVVKNLQI (258 aa)) form the CoA carboxyltransferase C-terminal domain.

The protein belongs to the AccA family. As to quaternary structure, acetyl-CoA carboxylase is a heterohexamer composed of biotin carboxyl carrier protein (AccB), biotin carboxylase (AccC) and two subunits each of ACCase subunit alpha (AccA) and ACCase subunit beta (AccD).

The protein resides in the cytoplasm. The catalysed reaction is N(6)-carboxybiotinyl-L-lysyl-[protein] + acetyl-CoA = N(6)-biotinyl-L-lysyl-[protein] + malonyl-CoA. It participates in lipid metabolism; malonyl-CoA biosynthesis; malonyl-CoA from acetyl-CoA: step 1/1. Its function is as follows. Component of the acetyl coenzyme A carboxylase (ACC) complex. First, biotin carboxylase catalyzes the carboxylation of biotin on its carrier protein (BCCP) and then the CO(2) group is transferred by the carboxyltransferase to acetyl-CoA to form malonyl-CoA. The chain is Acetyl-coenzyme A carboxylase carboxyl transferase subunit alpha from Carboxydothermus hydrogenoformans (strain ATCC BAA-161 / DSM 6008 / Z-2901).